Reading from the N-terminus, the 615-residue chain is Isocitrate dehydrogenase kinase/phosphatase (615 aa).

ATP-binding positions include 325–331 (APGIKGM) and Lys-346. Asp-381 is an active-site residue.

It belongs to the AceK family.

The protein resides in the cytoplasm. The catalysed reaction is L-seryl-[isocitrate dehydrogenase] + ATP = O-phospho-L-seryl-[isocitrate dehydrogenase] + ADP + H(+). Bifunctional enzyme which can phosphorylate or dephosphorylate isocitrate dehydrogenase (IDH) on a specific serine residue. This is a regulatory mechanism which enables bacteria to bypass the Krebs cycle via the glyoxylate shunt in response to the source of carbon. When bacteria are grown on glucose, IDH is fully active and unphosphorylated, but when grown on acetate or ethanol, the activity of IDH declines drastically concomitant with its phosphorylation. The polypeptide is Isocitrate dehydrogenase kinase/phosphatase (Albidiferax ferrireducens (strain ATCC BAA-621 / DSM 15236 / T118) (Rhodoferax ferrireducens)).